A 218-amino-acid chain; its full sequence is Nonsense-mediated decay protein 4 (218 aa).

The protein resides in the cytoplasm. Its function is as follows. Involved in nonsense-mediated decay of mRNAs containing premature stop codons. The sequence is that of Nonsense-mediated decay protein 4 (NMD4) from Saccharomyces cerevisiae (strain ATCC 204508 / S288c) (Baker's yeast).